The sequence spans 236 residues: Small ribosomal subunit protein uS2c (236 aa).

It belongs to the universal ribosomal protein uS2 family.

The protein resides in the plastid. Its subcellular location is the chloroplast. This is Small ribosomal subunit protein uS2c (rps2) from Nymphaea alba (White water-lily).